We begin with the raw amino-acid sequence, 1543 residues long: ATP-binding cassette sub-family A member 10 (1543 aa).

7 helical membrane passes run 83-103 (YWLK…IEVT), 135-155 (WFHF…SLNV), 185-205 (ICFI…IPIV), 210-230 (FMVI…LAFL), 240-260 (LAGL…FTVL), 264-284 (LPLS…TAGM), and 310-330 (IATF…TLYF). The ABC transporter 1 domain maps to 391–626 (IRIRNVIKEY…WGIGYHLSLH (236 aa)). Residue 427 to 434 (GHNGAGKS) coordinates ATP. Helical transmembrane passes span 774–794 (LLCL…EKIM), 890–910 (LNCF…IFNF), 926–946 (IVLD…TNCV), 985–1005 (IPLY…IFLG), 1014–1034 (FVLV…TYVL), 1046–1066 (GFWS…MVST), 1073–1093 (LILC…MLLI), and 1113–1133 (KTIL…LFVI). Positions 1153–1164 (ISPRSRETHPNP) are enriched in basic and acidic residues. Positions 1153–1177 (ISPRSRETHPNPEEPEEEDEDVQAE) are disordered. A compositionally biased stretch (acidic residues) spans 1165–1174 (EEPEEEDEDV). The 235-residue stretch at 1206-1440 (YETKKSCFST…FGRDYLLEIK (235 aa)) folds into the ABC transporter 2 domain. 1239-1246 (GHNGAGKS) is a binding site for ATP.

The protein belongs to the ABC transporter superfamily. ABCA family. In terms of tissue distribution, widely expressed. Highly expressed in skeletal muscle, heart, brain and gastrointestinal tract.

It is found in the membrane. In terms of biological role, probable transporter which may play a role in macrophage lipid transport and homeostasis. The protein is ATP-binding cassette sub-family A member 10 (ABCA10) of Homo sapiens (Human).